The following is a 192-amino-acid chain: Adenylate kinase (192 aa).

Residue 10-18 (GVPGVGSTT) participates in ATP binding.

The protein belongs to the archaeal adenylate kinase family. Monomer.

Its subcellular location is the cytoplasm. It catalyses the reaction AMP + ATP = 2 ADP. The polypeptide is Adenylate kinase (Methanococcus vannielii (strain ATCC 35089 / DSM 1224 / JCM 13029 / OCM 148 / SB)).